Here is a 1363-residue protein sequence, read N- to C-terminus: Neurexin-1 (1363 aa).

The Extracellular portion of the chain corresponds to 1-1287 (SKRRDMTVFS…EVIRESSSTT (1287 aa)). An N-linked (GlcNAc...) asparagine glycan is attached at asparagine 49. In terms of domain architecture, EGF-like 1 spans 67-105 (QSRLCAREDVCLNGGVCSVLNDQAVCDCSQTGFRGKDCS). Disulfide bonds link cysteine 71-cysteine 83, cysteine 77-cysteine 92, and cysteine 94-cysteine 104. 2 Laminin G-like domains span residues 132-329 (IATF…AFKC) and 336-528 (DPIT…KPSC). Ca(2+) is bound by residues aspartate 178, leucine 195, and methionine 263. Disulfide bonds link cysteine 293–cysteine 329, cysteine 499–cysteine 528, cysteine 536–cysteine 547, cysteine 541–cysteine 556, and cysteine 558–cysteine 568. Residues 532-569 (TAKPCLSNPCKNNGVCRDGWNRYVCDCSGTGYLGRSCE) form the EGF-like 2 domain. Laminin G-like domains follow at residues 574–747 (ILSY…IDYC) and 761–936 (DPVT…ERGC). Asparagine 646 carries N-linked (GlcNAc...) asparagine glycosylation. Intrachain disulfides connect cysteine 908/cysteine 936, cysteine 943/cysteine 954, cysteine 948/cysteine 963, and cysteine 965/cysteine 975. The EGF-like 3 domain maps to 939–976 (PSTTCQEDSCANQGVCLQQWDGFSCDCSMTSFSGPLCN). In terms of domain architecture, Laminin G-like 5 spans 982–1180 (YIFSKGGGQI…DANIVIEGNV (199 aa)). Asparagine 1079 is a glycosylation site (N-linked (GlcNAc...) asparagine). Residues 1244–1280 (CPSDDEDIDPCEPSSGGLANPTRAGGGREYPGSSEVI) form a disordered region. The chain crosses the membrane as a helical span at residues 1288 to 1308 (GMVVGIVAAAALCILILLYAM). Residues 1309 to 1363 (YKYRNRDEGSYHVDESRNYISNSAQSNGAVIKEKQPNSAKSSNKNKKNKDKEYYV) lie on the Cytoplasmic side of the membrane. The disordered stretch occupies residues 1330 to 1363 (NSAQSNGAVIKEKQPNSAKSSNKNKKNKDKEYYV).

Belongs to the neurexin family. In terms of assembly, the cytoplasmic C-terminal region binds to CASK. The laminin G-like domain 1 binds to NXPH1. Specific isoforms bind to alpha-dystroglycan and to alpha-latrotoxin. N- and O-glycosylated.

It is found in the membrane. Functionally, neuronal cell surface protein that may be involved in cell recognition and cell adhesion. May mediate intracellular signaling. In Gallus gallus (Chicken), this protein is Neurexin-1 (NRXN1).